The following is a 264-amino-acid chain: ATP synthase subunit a (264 aa).

6 consecutive transmembrane segments (helical) span residues threonine 29–phenylalanine 49, valine 89–methionine 109, aspartate 134–isoleucine 154, isoleucine 177–leucine 197, leucine 208–valine 228, and leucine 235–valine 255.

The protein belongs to the ATPase A chain family. In terms of assembly, F-type ATPases have 2 components, CF(1) - the catalytic core - and CF(0) - the membrane proton channel. CF(1) has five subunits: alpha(3), beta(3), gamma(1), delta(1), epsilon(1). CF(0) has three main subunits: a(1), b(2) and c(9-12). The alpha and beta chains form an alternating ring which encloses part of the gamma chain. CF(1) is attached to CF(0) by a central stalk formed by the gamma and epsilon chains, while a peripheral stalk is formed by the delta and b chains.

Its subcellular location is the cell inner membrane. Functionally, key component of the proton channel; it plays a direct role in the translocation of protons across the membrane. The polypeptide is ATP synthase subunit a (Shewanella sediminis (strain HAW-EB3)).